The following is a 132-amino-acid chain: Transmembrane protein 170B (132 aa).

The Extracellular segment spans residues 1–37; the sequence is MKAEGGDHSMINLSVQQVLSLWAHGTVLRNLTEMWYW. Asparagine 12 carries N-linked (GlcNAc...) asparagine glycosylation. The helical transmembrane segment at 38-58 threads the bilayer; it reads IFLWALFSSLFVHGAAGVLMF. Topologically, residues 59-68 are cytoplasmic; the sequence is VMLQRHRQGR. A helical transmembrane segment spans residues 69-89; sequence VISVIAVSIGFLASVTGAMIT. Residues 90 to 104 lie on the Extracellular side of the membrane; the sequence is SAAVAGIYRVAGKNM. A helical membrane pass occupies residues 105–125; it reads APLEALVWGVGQTVLTLIISF. Over 126-132 the chain is Cytoplasmic; the sequence is SRILATL.

It belongs to the TMEM170 family. As to quaternary structure, interacts with CTNNB1. In terms of tissue distribution, expressed in normal breast tissues. Down-regulated in breast cancer cells (at protein level).

The protein localises to the cell membrane. Its function is as follows. Negatively regulates the canonical Wnt signaling in breast cancer cells. Exerts an inhibitory effect on breast cancer growth by inhibiting CTNNB1 stabilization and nucleus translocation, which reduces the activity of Wnt targets. This is Transmembrane protein 170B (TMEM170B) from Homo sapiens (Human).